Reading from the N-terminus, the 777-residue chain is Kelch domain-containing protein 7A (777 aa).

The helical transmembrane segment at 21 to 38 threads the bilayer; the sequence is VVLSAAALLLVTVAYRLY. The segment at 43–207 is disordered; that stretch reads APAQRWGGNG…GLGQLEPPHC (165 aa). The residue at position 86 (Ser86) is a Phosphoserine. Over residues 113–127 the composition is skewed to basic and acidic residues; that stretch reads TDRKPQRKGSGEERG. A glycan (N-linked (GlcNAc...) asparagine) is linked at Asn257. Residues 313–359 form a disordered region; it reads LTEVPSPRPPPGSLGTGAASGGQAGDTKGAAERAASPQTGPWPSTRG. Over residues 326-336 the composition is skewed to gly residues; that stretch reads LGTGAASGGQA. Kelch repeat units lie at residues 328 to 374, 492 to 538, 541 to 589, 590 to 632, and 635 to 677; these read TGAA…ENPE, QYLV…ICSL, YLFV…ALDG, HLYA…ATVR, and EIFV…AVNG. Ser365 is modified (phosphoserine).

The protein resides in the membrane. The sequence is that of Kelch domain-containing protein 7A (KLHDC7A) from Homo sapiens (Human).